Reading from the N-terminus, the 156-residue chain is Small ribosomal subunit protein uS7 (156 aa).

The protein belongs to the universal ribosomal protein uS7 family. As to quaternary structure, part of the 30S ribosomal subunit. Contacts proteins S9 and S11.

Its function is as follows. One of the primary rRNA binding proteins, it binds directly to 16S rRNA where it nucleates assembly of the head domain of the 30S subunit. Is located at the subunit interface close to the decoding center, probably blocks exit of the E-site tRNA. The sequence is that of Small ribosomal subunit protein uS7 from Yersinia enterocolitica serotype O:8 / biotype 1B (strain NCTC 13174 / 8081).